The sequence spans 465 residues: MTHYAISDLLKNKAEIGSEVTVKGWVRSRRDSKAGVSFIHVHDGSCFDAIQAVVAKELPNYDADVLRLTTGCSLIVTGTLVESPGQGQSCEIQATSVELVGLVDDPETYPVAKKRHTFEFLRGVAHLRPRTNAFGAVTRVRTTLSHAVHHFFYEQGFQWINTPILTASDCEGAGELFRVSTLDMANLPKTDSGKIDYSKDFFGKETFLTVSGQLNVEAYCLAMSKVYTFGPTFRAENSNTSRHLAEFWMIEPEIAFADLNDDADLAERFLKHMFKVVLDERSDDMAFFAERINPDVVSRLENMVDKEFVRIDYSEAIKILQNCGKKFEYPVQWGLDLQSEHERYLAETHVGAPVIVMNYPKEIKAFYMRLNDDDKTVAAMDVLAPGIGEIIGGSQREDRLDVLDARIGDMHHKEELWWYRDLRRYGSVPHAGFGLGFERLIAYVTGMENVRDVIPFPRTPDNAQF.

Belongs to the class-II aminoacyl-tRNA synthetase family. In terms of assembly, homodimer.

The protein resides in the cytoplasm. It carries out the reaction tRNA(Asn) + L-asparagine + ATP = L-asparaginyl-tRNA(Asn) + AMP + diphosphate + H(+). In Hahella chejuensis (strain KCTC 2396), this protein is Asparagine--tRNA ligase.